The following is a 339-amino-acid chain: Phosphoribosylformylglycinamidine cyclo-ligase (339 aa).

The protein belongs to the AIR synthase family.

The protein localises to the cytoplasm. The enzyme catalyses 2-formamido-N(1)-(5-O-phospho-beta-D-ribosyl)acetamidine + ATP = 5-amino-1-(5-phospho-beta-D-ribosyl)imidazole + ADP + phosphate + H(+). Its pathway is purine metabolism; IMP biosynthesis via de novo pathway; 5-amino-1-(5-phospho-D-ribosyl)imidazole from N(2)-formyl-N(1)-(5-phospho-D-ribosyl)glycinamide: step 2/2. This is Phosphoribosylformylglycinamidine cyclo-ligase from Oceanobacillus iheyensis (strain DSM 14371 / CIP 107618 / JCM 11309 / KCTC 3954 / HTE831).